A 300-amino-acid polypeptide reads, in one-letter code: Protoheme IX farnesyltransferase (300 aa).

9 consecutive transmembrane segments (helical) span residues 20–40 (ITKMRLAISVVFSSVAGYFLG), 43–63 (TIDFVTVTLLAIGGYLMVGAS), 94–114 (PVAFTIASAFTVLGLVVLYVI), 116–136 (PKTAMFGAISIFLYVSIYTPL), 142–162 (LSVFVGAFPGAIPFMLGWVAA), 173–193 (LFMIQFFWQFPHFWAIGWWLF), 215–235 (IQIILYTCWTILVSLIPVFGV), 241–261 (LTPVSGIIIFLLGLGMLYYAI), and 276–296 (MFASVSYITLLQIVYVLDKFI).

This sequence belongs to the UbiA prenyltransferase family. Protoheme IX farnesyltransferase subfamily.

It is found in the cell membrane. It carries out the reaction heme b + (2E,6E)-farnesyl diphosphate + H2O = Fe(II)-heme o + diphosphate. Its pathway is porphyrin-containing compound metabolism; heme O biosynthesis; heme O from protoheme: step 1/1. Functionally, converts heme B (protoheme IX) to heme O by substitution of the vinyl group on carbon 2 of heme B porphyrin ring with a hydroxyethyl farnesyl side group. The protein is Protoheme IX farnesyltransferase of Christiangramia forsetii (strain DSM 17595 / CGMCC 1.15422 / KT0803) (Gramella forsetii).